We begin with the raw amino-acid sequence, 61 residues long: [Thr6, Val10, Asp11]-phyllokinin (61 aa).

A signal peptide spans Met1–Cys22. A propeptide spanning residues Glu23–Glu50 is cleaved from the precursor. The disordered stretch occupies residues Glu24–Asp61. Residues Glu30–Ser42 are compositionally biased toward acidic residues.

Belongs to the frog skin active peptide (FSAP) family. Bradykinin-related peptide subfamily. Expressed by the skin glands.

The protein resides in the secreted. Its function is as follows. Induces relaxation of rat smooth muscle from tail artery and contraction of that from ileum, urinary bladder and uterus. Binds to both bradykinin receptor B1 (BDKRB1) and B2 (BDKRB2). The chain is [Thr6, Val10, Asp11]-phyllokinin from Agalychnis spurrelli (Gliding leaf frog).